We begin with the raw amino-acid sequence, 194 residues long: Orotate phosphoribosyltransferase (194 aa).

116–124 (EDIVTTGLS) contributes to the 5-phospho-alpha-D-ribose 1-diphosphate binding site. Orotate-binding residues include threonine 120 and arginine 148.

Belongs to the purine/pyrimidine phosphoribosyltransferase family. PyrE subfamily. In terms of assembly, homodimer. Mg(2+) serves as cofactor.

It catalyses the reaction orotidine 5'-phosphate + diphosphate = orotate + 5-phospho-alpha-D-ribose 1-diphosphate. It functions in the pathway pyrimidine metabolism; UMP biosynthesis via de novo pathway; UMP from orotate: step 1/2. Its function is as follows. Catalyzes the transfer of a ribosyl phosphate group from 5-phosphoribose 1-diphosphate to orotate, leading to the formation of orotidine monophosphate (OMP). The chain is Orotate phosphoribosyltransferase from Phenylobacterium zucineum (strain HLK1).